Consider the following 217-residue polypeptide: Small ribosomal subunit protein uS3c (217 aa).

The 75-residue stretch at 43-117 (IKNYVQKNRK…KLNIAITRIA (75 aa)) folds into the KH type-2 domain.

Belongs to the universal ribosomal protein uS3 family. Part of the 30S ribosomal subunit.

It localises to the plastid. The protein resides in the chloroplast. This is Small ribosomal subunit protein uS3c (rps3) from Ranunculus macranthus (Large buttercup).